A 272-amino-acid chain; its full sequence is uncharacterized protein (272 aa).

The HTH merR-type domain maps to 1 to 27; the sequence is MDTLAFINRALVEEGYSLKDIKLVLIT.

This is an uncharacterized protein from Aquifex aeolicus (strain VF5).